The following is a 213-amino-acid chain: Orotate phosphoribosyltransferase (213 aa).

Residue Lys-26 participates in 5-phospho-alpha-D-ribose 1-diphosphate binding. Residue 34–35 (FF) participates in orotate binding. 5-phospho-alpha-D-ribose 1-diphosphate contacts are provided by residues 72–73 (YK), Arg-99, Lys-100, Lys-103, His-105, and 124–132 (DDVITAGTA). Residues Thr-128 and Arg-156 each coordinate orotate.

The protein belongs to the purine/pyrimidine phosphoribosyltransferase family. PyrE subfamily. As to quaternary structure, homodimer. The cofactor is Mg(2+).

The catalysed reaction is orotidine 5'-phosphate + diphosphate = orotate + 5-phospho-alpha-D-ribose 1-diphosphate. It functions in the pathway pyrimidine metabolism; UMP biosynthesis via de novo pathway; UMP from orotate: step 1/2. In terms of biological role, catalyzes the transfer of a ribosyl phosphate group from 5-phosphoribose 1-diphosphate to orotate, leading to the formation of orotidine monophosphate (OMP). The sequence is that of Orotate phosphoribosyltransferase from Salmonella arizonae (strain ATCC BAA-731 / CDC346-86 / RSK2980).